The primary structure comprises 447 residues: Tubulin beta chain (447 aa).

GTP-binding residues include glutamine 11, glutamate 69, serine 138, glycine 142, threonine 143, glycine 144, asparagine 204, and asparagine 226. Glutamate 69 provides a ligand contact to Mg(2+). Residues 419–447 are disordered; the sequence is VSEYQQYQDATADEEGEYEDEDQEAEDDM. Over residues 429 to 447 the composition is skewed to acidic residues; that stretch reads TADEEGEYEDEDQEAEDDM.

This sequence belongs to the tubulin family. In terms of assembly, dimer of alpha and beta chains. A typical microtubule is a hollow water-filled tube with an outer diameter of 25 nm and an inner diameter of 15 nM. Alpha-beta heterodimers associate head-to-tail to form protofilaments running lengthwise along the microtubule wall with the beta-tubulin subunit facing the microtubule plus end conferring a structural polarity. Microtubules usually have 13 protofilaments but different protofilament numbers can be found in some organisms and specialized cells. Mg(2+) serves as cofactor.

The protein resides in the cytoplasm. Its subcellular location is the cytoskeleton. Tubulin is the major constituent of microtubules, a cylinder consisting of laterally associated linear protofilaments composed of alpha- and beta-tubulin heterodimers. Microtubules grow by the addition of GTP-tubulin dimers to the microtubule end, where a stabilizing cap forms. Below the cap, tubulin dimers are in GDP-bound state, owing to GTPase activity of alpha-tubulin. This is Tubulin beta chain (TUBB) from Hordeum vulgare (Barley).